The primary structure comprises 88 residues: Insertion element ISR1 uncharacterized 10 kDa protein A3 (88 aa).

It belongs to the transposase 8 family.

This chain is Insertion element ISR1 uncharacterized 10 kDa protein A3, found in Rhizobium sp.